We begin with the raw amino-acid sequence, 485 residues long: Ras-like GTPase YcjX (485 aa).

Positions 33–40 match the Walker A motif motif; it reads GLSGAGKT. Residues Ser-35, Gly-36, Gly-38, Lys-39, Thr-40, Ala-41, Trp-110, Ser-113, Thr-114, Arg-115, Lys-355, Asp-357, and His-358 each contribute to the GTP site. GDP is bound by residues Gly-36, Gly-38, Lys-39, Thr-40, Ala-41, Trp-110, Ser-113, and Thr-114. The GDP site is built by Lys-355, Asp-357, His-358, Ser-395, Ala-396, and Ile-397. Residue Ile-397 participates in GTP binding.

In terms of assembly, monomer in solution. Mg(2+) serves as cofactor.

The catalysed reaction is GTP + H2O = GDP + phosphate + H(+). With respect to regulation, alternates between an inactive form bound to GDP and an active form bound to GTP. Likely activated by a guanine nucleotide-exchange factor (GEF). In terms of biological role, binds GTP and GDP. Has intrinsic GTPase activity. Does not hydrolyze ATP. May act as a transducer of stress responses. This chain is Ras-like GTPase YcjX, found in Shewanella oneidensis (strain ATCC 700550 / JCM 31522 / CIP 106686 / LMG 19005 / NCIMB 14063 / MR-1).